A 166-amino-acid chain; its full sequence is Regulatory protein RecX (166 aa).

The protein belongs to the RecX family.

The protein localises to the cytoplasm. Functionally, modulates RecA activity. This is Regulatory protein RecX from Escherichia coli O7:K1 (strain IAI39 / ExPEC).